The primary structure comprises 237 residues: Phosphatidylserine decarboxylase proenzyme (237 aa).

Catalysis depends on Ser-206, which acts as the Schiff-base intermediate with substrate; via pyruvic acid. Residue Ser-206 is modified to Pyruvic acid (Ser); by autocatalysis.

Belongs to the phosphatidylserine decarboxylase family. PSD-A subfamily. In terms of assembly, heterodimer of a large membrane-associated beta subunit and a small pyruvoyl-containing alpha subunit. Pyruvate serves as cofactor. Is synthesized initially as an inactive proenzyme. Formation of the active enzyme involves a self-maturation process in which the active site pyruvoyl group is generated from an internal serine residue via an autocatalytic post-translational modification. Two non-identical subunits are generated from the proenzyme in this reaction, and the pyruvate is formed at the N-terminus of the alpha chain, which is derived from the carboxyl end of the proenzyme. The post-translation cleavage follows an unusual pathway, termed non-hydrolytic serinolysis, in which the side chain hydroxyl group of the serine supplies its oxygen atom to form the C-terminus of the beta chain, while the remainder of the serine residue undergoes an oxidative deamination to produce ammonia and the pyruvoyl prosthetic group on the alpha chain.

The protein resides in the cell membrane. It carries out the reaction a 1,2-diacyl-sn-glycero-3-phospho-L-serine + H(+) = a 1,2-diacyl-sn-glycero-3-phosphoethanolamine + CO2. The protein operates within phospholipid metabolism; phosphatidylethanolamine biosynthesis; phosphatidylethanolamine from CDP-diacylglycerol: step 2/2. Catalyzes the formation of phosphatidylethanolamine (PtdEtn) from phosphatidylserine (PtdSer). The protein is Phosphatidylserine decarboxylase proenzyme of Rhodococcus opacus (strain B4).